The chain runs to 125 residues: Glycine cleavage system H protein (125 aa).

The Lipoyl-binding domain occupies 23–103; that stretch reads TALVGITDFA…PYNAWLIKMK (81 aa). At K64 the chain carries N6-lipoyllysine.

This sequence belongs to the GcvH family. As to quaternary structure, the glycine cleavage system is composed of four proteins: P, T, L and H. The cofactor is (R)-lipoate.

The glycine cleavage system catalyzes the degradation of glycine. The H protein shuttles the methylamine group of glycine from the P protein to the T protein. The chain is Glycine cleavage system H protein from Chlorobium chlorochromatii (strain CaD3).